A 49-amino-acid polypeptide reads, in one-letter code: Large ribosomal subunit protein eL40 (49 aa).

The protein belongs to the eukaryotic ribosomal protein eL40 family.

The protein is Large ribosomal subunit protein eL40 of Natronomonas pharaonis (strain ATCC 35678 / DSM 2160 / CIP 103997 / JCM 8858 / NBRC 14720 / NCIMB 2260 / Gabara) (Halobacterium pharaonis).